Reading from the N-terminus, the 508-residue chain is Argininosuccinate lyase (508 aa).

It belongs to the lyase 1 family. Argininosuccinate lyase subfamily.

The protein resides in the cytoplasm. It carries out the reaction 2-(N(omega)-L-arginino)succinate = fumarate + L-arginine. It functions in the pathway amino-acid biosynthesis; L-arginine biosynthesis; L-arginine from L-ornithine and carbamoyl phosphate: step 3/3. The sequence is that of Argininosuccinate lyase from Methanopyrus kandleri (strain AV19 / DSM 6324 / JCM 9639 / NBRC 100938).